A 299-amino-acid chain; its full sequence is DNA repair protein RecO (299 aa).

Positions 1–62 (MTLNSDADPD…GRRAPRTPAS (62 aa)) are disordered. A compositionally biased stretch (low complexity) spans 25 to 41 (ASKPARSTRKSSSAKSA).

It belongs to the RecO family.

In terms of biological role, involved in DNA repair and RecF pathway recombination. The sequence is that of DNA repair protein RecO from Paraburkholderia xenovorans (strain LB400).